A 204-amino-acid chain; its full sequence is uncharacterized protein (204 aa).

2 disordered regions span residues 1–37 and 159–204; these read MRAL…GSVS and GYRP…DGEL. The span at 28–37 shows a compositional bias: low complexity; the sequence is GRGPRAGSVS. One can recognise a WGR domain in the interval 88 to 175; sequence PYRLYVERLD…LPKEKWPAEA (88 aa). Basic and acidic residues-rich tracts occupy residues 166–179 and 188–204; these read LPKE…EHES and PEGH…DGEL.

This is an uncharacterized protein from Sinorhizobium fredii (strain NBRC 101917 / NGR234).